Reading from the N-terminus, the 301-residue chain is Small ribosomal subunit protein uS2 (301 aa).

Residues 237-301 (PTESWNDTVV…QDWSNSTSQW (65 aa)) form a disordered region. Over residues 264–278 (PQYAPAPQAAAAPVA) the composition is skewed to low complexity.

It belongs to the universal ribosomal protein uS2 family. In terms of assembly, component of the small ribosomal subunit. Mature ribosomes consist of a small (40S) and a large (60S) subunit. The 40S subunit contains about 33 different proteins and 1 molecule of RNA (18S). The 60S subunit contains about 49 different proteins and 3 molecules of RNA (28S, 5.8S and 5S). Interacts with ribosomal protein S21.

The protein resides in the cytoplasm. Functionally, required for the assembly and/or stability of the 40S ribosomal subunit. Required for the processing of the 20S rRNA-precursor to mature 18S rRNA in a late step of the maturation of 40S ribosomal subunits. This Diaphorina citri (Asian citrus psyllid) protein is Small ribosomal subunit protein uS2.